A 504-amino-acid polypeptide reads, in one-letter code: Probable ergothioneine transporter EgtUBC (504 aa).

An ABC transmembrane type-1 domain is found at 19–198 (LVQHIQISFV…LLAILFDFLL (180 aa)). The next 6 helical transmembrane spans lie at 25-44 (ISFV…GIYL), 57-74 (VAAI…GLLI), 81-97 (IVPA…LPIL), 146-170 (MVLI…LILL), 179-198 (LILL…DFLL), and 210-229 (IITI…VPYF). Positions 231-504 (SDKKEITIAG…DYLKDQGIIK (274 aa)) are ergothioneine binding domain.

This sequence in the N-terminal section; belongs to the binding-protein-dependent transport system permease family. The protein in the C-terminal section; belongs to the OsmX family. As to quaternary structure, the complex is probably composed of at least an ATP-binding protein (EgtUA) and a transmembrane protein (EgtUBC).

The protein localises to the membrane. Part of an ABC transporter complex EgtU required for the uptake of ergothioneine (EGT), a natural low-molecular weight (LMW) thiol antioxidant. Responsible for the translocation of the substrate across the membrane. Also contains a C-terminal periplasmic solute-binding domain (SBD) which binds to EGT with sub-micromolar affinity. Does not bind glycine betaine, carnitine, choline, proline, or cholate. Plays a role in bile acid tolerance. Dispensable for choline uptake. Probably not involved in betaine, carnitine or choline mediated osmo- or chill tolerance. Plays a role in enhancing virulence in mice. This Listeria monocytogenes serovar 1/2a (strain ATCC BAA-679 / EGD-e) protein is Probable ergothioneine transporter EgtUBC.